The chain runs to 613 residues: Portal protein (613 aa).

Positions 577-613 are disordered; the sequence is ATGGDHGIRQAPSARGDAEPDHAKSKPARDPPPGAGS. The segment covering 592–605 has biased composition (basic and acidic residues); the sequence is GDAEPDHAKSKPAR.

This sequence belongs to the herpesviridae portal protein family. As to quaternary structure, homododecamerizes. Interacts with terminase subunits TRM1 and TRM3.

The protein resides in the virion. It localises to the host nucleus. Forms a portal in the viral capsid through which viral DNA is translocated during DNA packaging. Assembles as a dodecamer at a single fivefold axe of the T=16 icosahedric capsid. Binds to the molecular motor that translocates the viral DNA, termed terminase. The chain is Portal protein from Homo sapiens (Human).